The sequence spans 231 residues: 2-C-methyl-D-erythritol 4-phosphate cytidylyltransferase (231 aa).

The protein belongs to the IspD/TarI cytidylyltransferase family. IspD subfamily.

It catalyses the reaction 2-C-methyl-D-erythritol 4-phosphate + CTP + H(+) = 4-CDP-2-C-methyl-D-erythritol + diphosphate. It functions in the pathway isoprenoid biosynthesis; isopentenyl diphosphate biosynthesis via DXP pathway; isopentenyl diphosphate from 1-deoxy-D-xylulose 5-phosphate: step 2/6. In terms of biological role, catalyzes the formation of 4-diphosphocytidyl-2-C-methyl-D-erythritol from CTP and 2-C-methyl-D-erythritol 4-phosphate (MEP). This Xylella fastidiosa (strain 9a5c) protein is 2-C-methyl-D-erythritol 4-phosphate cytidylyltransferase.